The sequence spans 348 residues: Holliday junction branch migration complex subunit RuvB (348 aa).

The tract at residues 4–184 is large ATPase domain (RuvB-L); the sequence is ADRLIAASGR…FGIVQRLEFY (181 aa). ATP contacts are provided by residues I23, R24, G65, K68, T69, T70, 131–133, R174, Y184, and R221; that span reads EDF. T69 contacts Mg(2+). The small ATPAse domain (RuvB-S) stretch occupies residues 185-255; it reads SDKDLATIVS…VADLALNLLD (71 aa). The head domain (RuvB-H) stretch occupies residues 258-348; it reads ERGFDHSDRR…GADFSEAGDE (91 aa). Positions 294, 313, and 318 each coordinate DNA.

The protein belongs to the RuvB family. As to quaternary structure, homohexamer. Forms an RuvA(8)-RuvB(12)-Holliday junction (HJ) complex. HJ DNA is sandwiched between 2 RuvA tetramers; dsDNA enters through RuvA and exits via RuvB. An RuvB hexamer assembles on each DNA strand where it exits the tetramer. Each RuvB hexamer is contacted by two RuvA subunits (via domain III) on 2 adjacent RuvB subunits; this complex drives branch migration. In the full resolvosome a probable DNA-RuvA(4)-RuvB(12)-RuvC(2) complex forms which resolves the HJ.

Its subcellular location is the cytoplasm. It carries out the reaction ATP + H2O = ADP + phosphate + H(+). Functionally, the RuvA-RuvB-RuvC complex processes Holliday junction (HJ) DNA during genetic recombination and DNA repair, while the RuvA-RuvB complex plays an important role in the rescue of blocked DNA replication forks via replication fork reversal (RFR). RuvA specifically binds to HJ cruciform DNA, conferring on it an open structure. The RuvB hexamer acts as an ATP-dependent pump, pulling dsDNA into and through the RuvAB complex. RuvB forms 2 homohexamers on either side of HJ DNA bound by 1 or 2 RuvA tetramers; 4 subunits per hexamer contact DNA at a time. Coordinated motions by a converter formed by DNA-disengaged RuvB subunits stimulates ATP hydrolysis and nucleotide exchange. Immobilization of the converter enables RuvB to convert the ATP-contained energy into a lever motion, pulling 2 nucleotides of DNA out of the RuvA tetramer per ATP hydrolyzed, thus driving DNA branch migration. The RuvB motors rotate together with the DNA substrate, which together with the progressing nucleotide cycle form the mechanistic basis for DNA recombination by continuous HJ branch migration. Branch migration allows RuvC to scan DNA until it finds its consensus sequence, where it cleaves and resolves cruciform DNA. The polypeptide is Holliday junction branch migration complex subunit RuvB (Pseudomonas putida (strain W619)).